The sequence spans 244 residues: Aspartate/glutamate leucyltransferase (244 aa).

Belongs to the R-transferase family. Bpt subfamily.

Its subcellular location is the cytoplasm. The enzyme catalyses N-terminal L-glutamyl-[protein] + L-leucyl-tRNA(Leu) = N-terminal L-leucyl-L-glutamyl-[protein] + tRNA(Leu) + H(+). It catalyses the reaction N-terminal L-aspartyl-[protein] + L-leucyl-tRNA(Leu) = N-terminal L-leucyl-L-aspartyl-[protein] + tRNA(Leu) + H(+). Functions in the N-end rule pathway of protein degradation where it conjugates Leu from its aminoacyl-tRNA to the N-termini of proteins containing an N-terminal aspartate or glutamate. The protein is Aspartate/glutamate leucyltransferase of Bordetella bronchiseptica (strain ATCC BAA-588 / NCTC 13252 / RB50) (Alcaligenes bronchisepticus).